Consider the following 266-residue polypeptide: Hydroxyethylthiazole kinase (266 aa).

A substrate-binding site is contributed by Met-43. The ATP site is built by Arg-119 and Thr-166. Gly-193 is a substrate binding site.

This sequence belongs to the Thz kinase family. The cofactor is Mg(2+).

It carries out the reaction 5-(2-hydroxyethyl)-4-methylthiazole + ATP = 4-methyl-5-(2-phosphooxyethyl)-thiazole + ADP + H(+). It participates in cofactor biosynthesis; thiamine diphosphate biosynthesis; 4-methyl-5-(2-phosphoethyl)-thiazole from 5-(2-hydroxyethyl)-4-methylthiazole: step 1/1. Catalyzes the phosphorylation of the hydroxyl group of 4-methyl-5-beta-hydroxyethylthiazole (THZ). In Methanococcus maripaludis (strain C7 / ATCC BAA-1331), this protein is Hydroxyethylthiazole kinase.